The sequence spans 500 residues: MAASFVIVIVISFFISLAFMCYVHYTSRQRRKLHGYGHEKAVRLPPGSMGWPYIGETLQLYSQDPNVFFASKQKRYGEIFKTHILGCPCVMLASPEAARFVLVTQAHLFKPTYPRSKERMIGPSALFFHQGDYHLRLRKLVQGPLGPDALRALVPDVEAAVRSTLASWDGNVSSTFHAMKRLSFDVGIVTIFGGRLDERRKAELRQNYAIVEKGYNSFPNSFPGTLYYKAIQARRRLHGVLSDIMRERRARGEPGSDLLGCLMQSRAGDDGALLTDEQVADNIIGVLFAAQDTTASVLTWIVKYLHDHPKLLEAVRAEQAAIRAANDGGRLPLTWAQTRSMALTHKVILESLRMASIISFTFREAVADVEYKGFLIPKGWKVMPLFRNIHHNPDYFQDPQKFDPSRFKVSPRPNTFMPFGNGVHACPGNELAKLEMLVLIHHLVTGYRWEIVGSSDEVEYSPFPVPKHGLLAKLWRDDSVSVETDGCQNGDNDDNGVAMV.

Residues 3-23 (ASFVIVIVISFFISLAFMCYV) traverse the membrane as a helical segment. Cys-426 contacts heme.

Belongs to the cytochrome P450 family. It depends on heme as a cofactor.

It localises to the membrane. It catalyses the reaction 2-cis-(+)-abscisate + reduced [NADPH--hemoprotein reductase] + O2 = (+)-8'-hydroxyabscisate + oxidized [NADPH--hemoprotein reductase] + H2O + H(+). Its pathway is plant hormone degradation; abscisic acid degradation. Functionally, involved in the oxidative degradation of abscisic acid. The polypeptide is Abscisic acid 8'-hydroxylase 3 (CYP707A7) (Oryza sativa subsp. japonica (Rice)).